The sequence spans 330 residues: AH receptor-interacting protein (330 aa).

The residue at position 43 (S43) is a Phosphoserine. The region spanning 54–146 (RVRGKPMELI…DLDALQQNPQ (93 aa)) is the PPIase FKBP-type domain. TPR repeat units lie at residues 179–212 (VPLI…LKNL), 231–264 (TPLL…YDDN), and 265–298 (VKAY…DPAL).

Interacts with RET in the pituitary gland; this interaction prevents the formation of the AIP-survivin complex.

It is found in the cytoplasm. Its function is as follows. May play a positive role in AHR-mediated (aromatic hydrocarbon receptor) signaling, possibly by influencing its receptivity for ligand and/or its nuclear targeting. Functionally, cellular negative regulator of the hepatitis B virus (HBV) X protein. The protein is AH receptor-interacting protein (AIP) of Chlorocebus aethiops (Green monkey).